Here is a 380-residue protein sequence, read N- to C-terminus: Chaperone protein DnaJ (380 aa).

The 66-residue stretch at 5–70 (DYYEVLGVSK…QKRQTYDQYG (66 aa)) folds into the J domain. The segment at 136–214 (GKEVEIKIPT…CHGQGRVEKT (79 aa)) adopts a CR-type zinc-finger fold. Residues C149, C152, C166, C169, C188, C191, C202, and C205 each coordinate Zn(2+). CXXCXGXG motif repeat units lie at residues 149 to 156 (CDPCDGSG), 166 to 173 (CTTCHGAG), 188 to 195 (CPTCQGQG), and 202 to 209 (CDSCHGQG).

It belongs to the DnaJ family. Homodimer. Zn(2+) is required as a cofactor.

Its subcellular location is the cytoplasm. In terms of biological role, participates actively in the response to hyperosmotic and heat shock by preventing the aggregation of stress-denatured proteins and by disaggregating proteins, also in an autonomous, DnaK-independent fashion. Unfolded proteins bind initially to DnaJ; upon interaction with the DnaJ-bound protein, DnaK hydrolyzes its bound ATP, resulting in the formation of a stable complex. GrpE releases ADP from DnaK; ATP binding to DnaK triggers the release of the substrate protein, thus completing the reaction cycle. Several rounds of ATP-dependent interactions between DnaJ, DnaK and GrpE are required for fully efficient folding. Also involved, together with DnaK and GrpE, in the DNA replication of plasmids through activation of initiation proteins. The chain is Chaperone protein DnaJ from Pseudoalteromonas translucida (strain TAC 125).